The sequence spans 330 residues: ADP-L-glycero-D-manno-heptose-6-epimerase (330 aa).

NADP(+) contacts are provided by residues 11 to 12, 32 to 33, Lys39, Lys54, 75 to 79, and Asn92; these read FI, DN, and EGACS. The Proton acceptor role is filled by Tyr139. Lys143 contributes to the NADP(+) binding site. Substrate is bound at residue Asn168. NADP(+) contacts are provided by Val169 and Lys177. Catalysis depends on Lys177, which acts as the Proton acceptor. Substrate is bound by residues Arg179, His186, 200 to 203, Arg213, and Tyr292; that span reads FGEY.

This sequence belongs to the NAD(P)-dependent epimerase/dehydratase family. HldD subfamily. As to quaternary structure, homopentamer. NADP(+) is required as a cofactor.

The enzyme catalyses ADP-D-glycero-beta-D-manno-heptose = ADP-L-glycero-beta-D-manno-heptose. Its pathway is nucleotide-sugar biosynthesis; ADP-L-glycero-beta-D-manno-heptose biosynthesis; ADP-L-glycero-beta-D-manno-heptose from D-glycero-beta-D-manno-heptose 7-phosphate: step 4/4. Functionally, catalyzes the interconversion between ADP-D-glycero-beta-D-manno-heptose and ADP-L-glycero-beta-D-manno-heptose via an epimerization at carbon 6 of the heptose. This chain is ADP-L-glycero-D-manno-heptose-6-epimerase, found in Burkholderia thailandensis (strain ATCC 700388 / DSM 13276 / CCUG 48851 / CIP 106301 / E264).